Consider the following 476-residue polypeptide: PRAME family member 5 (476 aa).

An LRR 1; degenerate repeat occupies 97–124 (RWKLQVLDLQDVCENFWMVWSEAMAHGC). The stretch at 179–203 (HLCCKKLKILGMPFRNIRSILKMVN) is one LRR 2; degenerate repeat. An LRR 3; degenerate repeat occupies 204–230 (LDCIQEVEVNCKWVLPILTQFTPYLGH). The stretch at 231-266 (MRNLQKLVLSHMDVSRYVSPEQKKEIVTQFTTQFLK) is one LRR 4; degenerate repeat. LRR repeat units lie at residues 267–292 (LCCLQKLSMNSVSFLEGHLDQLLSCL), 293–324 (KTSLKVLTITNCVLLESDLKHLSQCPSISQLK), 325–345 (TLDLSGIRLTNYSLVPLQILL), 349–376 (AATLEYLDLDDCGIIDSQVNAILPALSR), and 377–401 (CFELNTFSFCGNPISMATLENLLSH).

It belongs to the PRAME family.

In Homo sapiens (Human), this protein is PRAME family member 5.